The sequence spans 190 residues: MTEDTSMQSTLNATLPETDMPLAEKEAAVEKQEYRNAMARLGSAVNIITTDGPGGRAGFTASAVCSVTDTPPTLLVCLNRSASVHPAFIQNQVLCVNTLADSHESLSNLFGGKTPMEQRFDAAEWTDLATGSPILTNALVSFDCKVTQITRVGTHDIMFCEVVALRCNDDCHGLAYFDRRYHPLMRQIAC.

The protein belongs to the non-flavoprotein flavin reductase family. RutF subfamily.

The enzyme catalyses FMNH2 + NAD(+) = FMN + NADH + 2 H(+). In terms of biological role, catalyzes the reduction of FMN to FMNH2 which is used to reduce pyrimidine by RutA via the Rut pathway. This is FMN reductase (NADH) RutF from Pantoea ananatis (strain LMG 20103).